The following is a 548-amino-acid chain: Chaperonin GroEL (548 aa).

ATP contacts are provided by residues 29-32, lysine 50, 86-90, glycine 414, 478-480, and aspartate 494; these read TLGP, DGTTT, and NAA.

This sequence belongs to the chaperonin (HSP60) family. Forms a cylinder of 14 subunits composed of two heptameric rings stacked back-to-back. Interacts with the co-chaperonin GroES.

The protein resides in the cytoplasm. The enzyme catalyses ATP + H2O + a folded polypeptide = ADP + phosphate + an unfolded polypeptide.. In terms of biological role, together with its co-chaperonin GroES, plays an essential role in assisting protein folding. The GroEL-GroES system forms a nano-cage that allows encapsulation of the non-native substrate proteins and provides a physical environment optimized to promote and accelerate protein folding. The polypeptide is Chaperonin GroEL (Psychrobacter sp. (strain PRwf-1)).